Here is a 445-residue protein sequence, read N- to C-terminus: 2-oxoisovalerate dehydrogenase subunit alpha, mitochondrial (445 aa).

Residues 1 to 45 constitute a mitochondrion transit peptide; that stretch reads MAVAIAAARVWRLNRGLSQAALLLLRRPGARGLARSHPRRQQQQF. The disordered stretch occupies residues 33–54; the sequence is LARSHPRRQQQQFSSLDDKPQF. The thiamine diphosphate site is built by Y158 and R159. K(+) is bound at residue S206. S207 lines the thiamine diphosphate pocket. 3 residues coordinate K(+): P208, T211, and Q212. Residue E238 coordinates Mg(2+). G239, A240, and R265 together coordinate thiamine diphosphate. Mg(2+) is bound by residues N267 and Y269. H336 is a binding site for thiamine diphosphate. S337 carries the phosphoserine; by BCKDK modification. Phosphothreonine is present on T338. Phosphoserine is present on residues S339 and S347. K356 bears the N6-acetyllysine; alternate mark. K356 is modified (N6-succinyllysine; alternate). K380 is modified (N6-succinyllysine).

The protein belongs to the BCKDHA family. In terms of assembly, heterotetramer of 2 alpha/BCKDHA and 2 beta chains/BCKDHB that forms the branched-chain alpha-keto acid decarboxylase (E1) component of the BCKD complex. The branched-chain alpha-ketoacid dehydrogenase is a large complex composed of three major building blocks E1, E2 and E3. It is organized around E2, a 24-meric cubic core composed of DBT, to which are associated 6 to 12 copies of E1, and approximately 6 copies of the dehydrogenase E3, a DLD dimer. Interacts with PPM1K. Thiamine diphosphate is required as a cofactor. Requires Mg(2+) as cofactor. Phosphorylated at Ser-337 by BCKDK and dephosphorylated by protein phosphatase PPM1K.

The protein localises to the mitochondrion matrix. The catalysed reaction is N(6)-[(R)-lipoyl]-L-lysyl-[protein] + 3-methyl-2-oxobutanoate + H(+) = N(6)-[(R)-S(8)-2-methylpropanoyldihydrolipoyl]-L-lysyl-[protein] + CO2. Its function is as follows. Together with BCKDHB forms the heterotetrameric E1 subunit of the mitochondrial branched-chain alpha-ketoacid dehydrogenase (BCKD) complex. The BCKD complex catalyzes the multi-step oxidative decarboxylation of alpha-ketoacids derived from the branched-chain amino-acids valine, leucine and isoleucine producing CO2 and acyl-CoA which is subsequently utilized to produce energy. The E1 subunit catalyzes the first step with the decarboxylation of the alpha-ketoacid forming an enzyme-product intermediate. A reductive acylation mediated by the lipoylamide cofactor of E2 extracts the acyl group from the E1 active site for the next step of the reaction. This chain is 2-oxoisovalerate dehydrogenase subunit alpha, mitochondrial (BCKDHA), found in Pan troglodytes (Chimpanzee).